A 526-amino-acid chain; its full sequence is Nucleobase-ascorbate transporter 4 (526 aa).

12 consecutive transmembrane segments (helical) span residues 42-62, 69-89, 91-111, 131-151, 157-177, 186-206, 217-237, 282-302, 359-381, 388-410, 420-440, and 457-477; these read IVMLGTTVIIPSILVPLMGGG, VINTVLFVSGINTLLQSLFGS, LPVVMGASYAYLIPALYITFS, IQGALIIASISHMIMGFFGLW, FLSPLSAAPLVILTGVGLLAF, IEIGLPALIILIILSQYLPHL, FAVLFTIAIVWAYAEILTAAG, AFAMMAATYVAIVETTGSFIA, RVVQISAGFMIFFSIFGKFGAVL, IFAALYCVLFAYVASAGLGLLQF, FILGFSIFIGLSVAQYFTEYL, and VIMQVIFSSAATVGIMAAFLL.

The protein belongs to the nucleobase:cation symporter-2 (NCS2) (TC 2.A.40) family. In terms of tissue distribution, highly expressed in the root central cylinder. Expressed in the filaments and stigmatic papillae of pollinated flowers and developing siliques.

The protein localises to the membrane. The sequence is that of Nucleobase-ascorbate transporter 4 (NAT4) from Arabidopsis thaliana (Mouse-ear cress).